Reading from the N-terminus, the 529-residue chain is Delayed-rectifier potassium channel regulatory subunit KCNS1 (529 aa).

Residues 1-217 (MLMLLVRGTR…LTMENPGYSL (217 aa)) are Cytoplasmic-facing. The chain crosses the membrane as a helical span at residues 218–239 (PSKLFSCVSISVVLASIAAMCI). Over 240 to 270 (HSLPEYQAREAAAAVAAVAAGRSAEGVRDDP) the chain is Extracellular. The chain crosses the membrane as a helical span at residues 271-293 (VLRRLEYFCIAWFSFEVSSRLLL). Residues 294–304 (APSTRNFFCHP) lie on the Cytoplasmic side of the membrane. The helical transmembrane segment at 305 to 322 (LNLIDIVSVLPFYLTLLA) threads the bilayer. Residues 323-340 (GAALGDHGGTGGKEFGHL) lie on the Extracellular side of the membrane. A helical; Voltage-sensor transmembrane segment spans residues 341–361 (GKVVQVFRLMRIFRVLKLARH). Residues 362 to 376 (STGLRSLGATLKHSY) are Cytoplasmic-facing. The chain crosses the membrane as a helical span at residues 377-398 (REVGILLLYLAVGVSVFSGVAY). The Extracellular portion of the chain corresponds to 399-411 (TAEKEEHVGFDTI). The helical intramembrane region spans 412 to 423 (PACWWWGTVSMT). Residues 424–429 (TVGYGD) carry the Selectivity filter motif. Residues 424 to 431 (TVGYGDVV) lie within the membrane without spanning it. At 432 to 438 (PVTVAGK) the chain is on the extracellular side. A helical transmembrane segment spans residues 439–467 (LAASGCILGGILVVALPITIIFNKFSHFY). Residues 468–529 (RRQKALEAAV…PSEPPHSQMY (62 aa)) lie on the Cytoplasmic side of the membrane. A disordered region spans residues 494-529 (GVSEASLETSRETSQEGRSADLETQVPSEPPHSQMY). A compositionally biased stretch (basic and acidic residues) spans 502 to 514 (TSRETSQEGRSAD).

The protein belongs to the potassium channel family. S (TC 1.A.1.2) subfamily. Kv9.1/KCNS1 sub-subfamily. As to quaternary structure, heterotetramer with KCNB1. Heterotetramer with KCNB2. Does not form homomultimers.

Its subcellular location is the cell membrane. Its function is as follows. Potassium channel regulatory subunit that modulate the delayed rectifier voltage-gated potassium channel activity of KCNB1 and KCNB2 by altering their kinetics, expression levels, and shifting the half-inactivation potential to more polarized values. While it does not form functional channels on its own, it can form functional heterotetrameric channels with KCNB1 and KCNB2. Each regulatory subunit has unique regulatory properties that can lead to extensive inhibition, significant changes in kinetics, and/or substantial shifts in the voltage dependencies of the inactivation process. In Aotus nancymaae (Ma's night monkey), this protein is Delayed-rectifier potassium channel regulatory subunit KCNS1.